The sequence spans 471 residues: Coagulation factor IX (471 aa).

A signal peptide spans 1–28; sequence MKHLNTVMAESPALITIFLLGYLLSTEC. Residues 29–46 constitute a propeptide that is removed on maturation; sequence AVFLDRENATKILTRPKR. Ca(2+) contacts are provided by Tyr-47, Asn-48, Glu-53, Glu-54, Glu-61, Glu-63, Glu-66, Glu-67, Glu-72, Glu-73, and Glu-76. One can recognise a Gla domain in the interval 47-92; it reads YNSGKLEEFVRGNLERECIEERCSFEEAREVFENTEKTTEFWKQYV. 4-carboxyglutamate is present on residues Glu-53, Glu-54, Glu-61, Glu-63, Glu-66, Glu-67, Glu-72, Glu-73, Glu-76, Glu-79, and Glu-82. Glu-61 is a Mg(2+) binding site. A disulfide bridge connects residues Cys-64 and Cys-69. Glu-66 contacts Mg(2+). A Mg(2+)-binding site is contributed by Glu-72. A Mg(2+)-binding site is contributed by Glu-76. Glu-82 serves as a coordination point for Ca(2+). Glu-82 serves as a coordination point for Mg(2+). O-linked (GalNAc...) threonine glycosylation occurs at Thr-85. Ca(2+) contacts are provided by Glu-86, Asp-93, Gly-94, and Gln-96. 4-carboxyglutamate is present on Glu-86. Glu-86 lines the Mg(2+) pocket. The EGF-like 1; calcium-binding domain maps to 93 to 129; sequence DGDQCESNPCLNGGICKDDISSYECWCQVGFEGRNCE. Cystine bridges form between Cys-97–Cys-108, Cys-102–Cys-117, Cys-119–Cys-128, Cys-134–Cys-145, Cys-141–Cys-155, Cys-157–Cys-170, Cys-178–Cys-345, Cys-262–Cys-278, Cys-392–Cys-406, and Cys-417–Cys-445. Ser-99 carries O-linked (Glc...) serine glycosylation. Residues Asp-110 and Asp-111 each coordinate Ca(2+). Asp-110 is subject to (3R)-3-hydroxyaspartate. Phosphoserine is present on Ser-114. The EGF-like 2 domain maps to 130-171; sequence LDATCNIKNGRCKQFCKNSPDNKVICSCTEGYQLAEDQKSCE. Positions 193 to 236 are cleaved as a propeptide — activation peptide; sequence AETVFSNMDYENSTEAVFIQDDITDGAILNNVTESSESLNDFTR. Tyr-202 is modified (sulfotyrosine). N-linked (GlcNAc...) asparagine glycosylation occurs at Asn-204. Ser-205 bears the Phosphoserine mark. Thr-206 is subject to Phosphothreonine; alternate. Residue Thr-206 is glycosylated (O-linked (GalNAc...) threonine; alternate). Asn-223 carries an N-linked (GlcNAc...) asparagine glycan. O-linked (GalNAc...) threonine glycans are attached at residues Thr-225 and Thr-235. The Peptidase S1 domain maps to 237-469; the sequence is VVGGENAKPG…YVNWIKEKTK (233 aa). His-277 (charge relay system) is an active-site residue. Positions 291, 293, 298, and 301 each coordinate Ca(2+). The active-site Charge relay system is Asp-325. Ser-421 (charge relay system) is an active-site residue.

Belongs to the peptidase S1 family. As to quaternary structure, heterodimer of a light chain and a heavy chain; disulfide-linked. Interacts (inactive and activated) with F11 (activated) in calcium-dependent manner. Interacts with SERPINC1. In terms of processing, activated by factor XIa, which excises the activation peptide. The propeptide can also be removed by snake venom protease. Activated by coagulation factor VIIa-tissue factor (F7-F3) complex in calcium-dependent manner. The iron and 2-oxoglutarate dependent 3-hydroxylation of aspartate and asparagine is (R) stereospecific within EGF domains. Post-translationally, predominantly O-glucosylated at Ser-99 by POGLUT1 in vitro. Detected in liver.

The protein resides in the secreted. The enzyme catalyses Selective cleavage of Arg-|-Ile bond in factor X to form factor Xa.. Its function is as follows. Factor IX is a vitamin K-dependent plasma protein that participates in the intrinsic pathway of blood coagulation by converting factor X to its active form in the presence of Ca(2+) ions, phospholipids, and factor VIIIa. The polypeptide is Coagulation factor IX (F9) (Mus musculus (Mouse)).